The following is a 152-amino-acid chain: Deoxyuridine 5'-triphosphate nucleotidohydrolase (152 aa).

Substrate contacts are provided by residues 71 to 73 (RSG), Asn84, 88 to 90 (LID), and Met98.

It belongs to the dUTPase family. Requires Mg(2+) as cofactor.

It catalyses the reaction dUTP + H2O = dUMP + diphosphate + H(+). Its pathway is pyrimidine metabolism; dUMP biosynthesis; dUMP from dCTP (dUTP route): step 2/2. This enzyme is involved in nucleotide metabolism: it produces dUMP, the immediate precursor of thymidine nucleotides and it decreases the intracellular concentration of dUTP so that uracil cannot be incorporated into DNA. The sequence is that of Deoxyuridine 5'-triphosphate nucleotidohydrolase from Klebsiella pneumoniae subsp. pneumoniae (strain ATCC 700721 / MGH 78578).